The sequence spans 315 residues: Secreted mono- and diacylglycerol lipase LIP2 (315 aa).

The signal sequence occupies residues methionine 1–alanine 21. A disulfide bond links cysteine 68 and cysteine 308. An N-linked (GlcNAc...) asparagine glycan is attached at asparagine 74. The active-site Nucleophile is serine 182. Aspartate 240 is a catalytic residue. The N-linked (GlcNAc...) asparagine glycan is linked to asparagine 265. Histidine 292 is an active-site residue.

Belongs to the AB hydrolase superfamily. Lipase family. Class 3 subfamily.

Its subcellular location is the secreted. The enzyme catalyses a monoacylglycerol + H2O = glycerol + a fatty acid + H(+). It catalyses the reaction a diacylglycerol + H2O = a monoacylglycerol + a fatty acid + H(+). Functionally, secreted lipase involved in Dandruff and seborrheic dermatitis (D/SD) probably via lipase-mediated breakdown of sebaceous lipids and release of irritating free fatty acids. Shows activity against monoglyceride and diglyceride substrates and generates free oleic acid from the substrates mono- and diolein. Able to cleave the oleic acid from both the 1 and the 2 position of the glycerol backbone as 1,2 isomers of diolein were converted into oleic acid and glycerol. Due to an absence of fatty acid synthase genes in Malassezia species, secretory lipases are essential for the yeast to generate free fatty acids from degradation of sebum and assimilate them as lipid sources for growth. Plays an essential role at the pathogen-host interface during disease progression. Also performs the reverse reaction to build diacylglycerols from monoacylglycerols. This Malassezia restricta (Seborrheic dermatitis infection agent) protein is Secreted mono- and diacylglycerol lipase LIP2.